Here is a 308-residue protein sequence, read N- to C-terminus: N-acetylmuramic acid 6-phosphate etherase (308 aa).

One can recognise an SIS domain in the interval 63–226; it reads IVDAFACGGR…STASMIRSGK (164 aa). The Proton donor role is filled by Glu91. Glu122 is an active-site residue.

Belongs to the GCKR-like family. MurNAc-6-P etherase subfamily. In terms of assembly, homodimer.

It catalyses the reaction N-acetyl-D-muramate 6-phosphate + H2O = N-acetyl-D-glucosamine 6-phosphate + (R)-lactate. It functions in the pathway amino-sugar metabolism; 1,6-anhydro-N-acetylmuramate degradation. Its pathway is amino-sugar metabolism; N-acetylmuramate degradation. It participates in cell wall biogenesis; peptidoglycan recycling. In terms of biological role, specifically catalyzes the cleavage of the D-lactyl ether substituent of MurNAc 6-phosphate, producing GlcNAc 6-phosphate and D-lactate. Together with AnmK, is also required for the utilization of anhydro-N-acetylmuramic acid (anhMurNAc) either imported from the medium or derived from its own cell wall murein, and thus plays a role in cell wall recycling. The sequence is that of N-acetylmuramic acid 6-phosphate etherase from Colwellia psychrerythraea (strain 34H / ATCC BAA-681) (Vibrio psychroerythus).